The chain runs to 75 residues: UPF0352 protein YejL (75 aa).

The protein belongs to the UPF0352 family.

This Salmonella arizonae (strain ATCC BAA-731 / CDC346-86 / RSK2980) protein is UPF0352 protein YejL.